The following is a 68-amino-acid chain: Protein SlyX homolog (68 aa).

It belongs to the SlyX family.

The polypeptide is Protein SlyX homolog (Pseudomonas fluorescens (strain SBW25)).